Consider the following 1039-residue polypeptide: 3',5'-cyclic-AMP phosphodiesterase 4 (1039 aa).

Positions 1-29 are cleaved as a signal peptide; it reads MFNNNNNDKINNTMMSNNPSGQIINLESI. N-linked (GlcNAc...) asparagine glycans are attached at residues N11, N34, and N37. Topologically, residues 30-201 are extracellular; that stretch reads DCNSNLSNTT…KKKVNAESLR (172 aa). Disordered regions lie at residues 40–63 and 116–181; these read SIKD…NNIN and IIPN…NNSI. Low complexity predominate over residues 45–63; sequence NNNNNNNNNNNNNINNNIN. N119, N124, N131, N167, and N178 each carry an N-linked (GlcNAc...) asparagine glycan. A helical membrane pass occupies residues 202–222; sequence GPIIFQNFILYTFFLIVIGTA. The Cytoplasmic portion of the chain corresponds to 223 to 226; it reads EGTS. The chain crosses the membrane as a helical span at residues 227 to 247; sequence WAPEIRVANFVPYCVMCVVLL. Topologically, residues 248-256 are extracellular; it reads EFNRLHKKP. The chain crosses the membrane as a helical span at residues 257–277; sequence LLRIIFPLYTSNIPFAYMCIF. The Cytoplasmic segment spans residues 278–283; the sequence is SREARK. The helical transmembrane segment at 284–304 threads the bilayer; sequence YVLISLLFFASCLCIFLQSGI. Residues 305 to 310 are Extracellular-facing; sequence PDLRKH. Residues 311-331 traverse the membrane as a helical segment; it reads IVIFCIIFMINYGCCILFMDW. At 332–356 the chain is on the cytoplasmic side; the sequence is FYIDTTGTKPYRGRILATKIHWGEE. A helical transmembrane segment spans residues 357 to 377; sequence ATILVSMALLGCIFIVLEKFI. Topologically, residues 378–1039 are extracellular; that stretch reads KSYARCVAEQ…LTQSNYLIVV (662 aa). Residues 384–414 are a coiled coil; sequence VAEQHYQIQCLQKEKEKLQTEINISLKKLDL. N406, N430, N500, and N515 each carry an N-linked (GlcNAc...) asparagine glycan. The PDEase domain occupies 533–973; sequence PEITDQGIQE…QQLQQQQQQQ (441 aa). Catalysis depends on H609, which acts as the Proton donor. The a divalent metal cation site is built by H613, H648, and D649. Positions 738 to 835 are disordered; it reads FPTTTNTQQP…NNSNSNNQNQ (98 aa). Residues 740–835 are compositionally biased toward low complexity; sequence TTTNTQQPSS…NNSNSNNQNQ (96 aa). N769, N791, N795, N804, N809, N823, and N826 each carry an N-linked (GlcNAc...) asparagine glycan. D861 contacts a divalent metal cation. 4 N-linked (GlcNAc...) asparagine glycosylation sites follow: N874, N944, N1018, and N1023. The segment covering 978–1019 has biased composition (low complexity); it reads QQQQQQLHHHQQQQQFQHQQHQQQLQHQHQQQLNNQNQNQNQ. The tract at residues 978–1033 is disordered; sequence QQQQQQLHHHQQQQQFQHQQHQQQLQHQHQQQLNNQNQNQNQSNSNNSNSFGLTQS. Polar residues predominate over residues 1020-1033; the sequence is SNSNNSNSFGLTQS.

This sequence belongs to the cyclic nucleotide phosphodiesterase family. The cofactor is a divalent metal cation.

The protein resides in the cell membrane. It catalyses the reaction 3',5'-cyclic AMP + H2O = AMP + H(+). Inhibited by 3-isobutyl-1-methylxanthine (IBMX). Phosphodiesterase specific for extracellular cAMP. Involved in the degradation of extracellular cAMP specifically during multicellular development. The chain is 3',5'-cyclic-AMP phosphodiesterase 4 (Pde4) from Dictyostelium discoideum (Social amoeba).